Reading from the N-terminus, the 225-residue chain is GTP-binding nuclear protein Ran (225 aa).

The region spanning 8-172 is the Small GTPase Ran-type domain; it reads VVAEFKLVLV…LWILRKLTGD (165 aa). 19–26 contacts GTP; the sequence is DGGVGKTT. The switch-I stretch occupies residues 38-46; sequence KRYIATQGV. GTP-binding positions include Gly-69, 123 to 126, and 151 to 153; these read NKVD and SAK. The interval 69–85 is switch-II; sequence GQEKLGGLREGYYIGAN.

This sequence belongs to the small GTPase superfamily. Ran family. In terms of assembly, monomer. Found in a nuclear export complex with RanGTP, exportin and pre-miRNA.

Its subcellular location is the nucleus. GTP-binding protein involved in nucleocytoplasmic transport. Required for the import of protein into the nucleus and also for RNA export. Involved in chromatin condensation and control of cell cycle. This Tetrahymena thermophila protein is GTP-binding nuclear protein Ran.